We begin with the raw amino-acid sequence, 882 residues long: Bifunctional heparan sulfate N-deacetylase/N-sulfotransferase 1 (882 aa).

Topologically, residues 1–17 (MPALACLRRLCRHVSPQ) are cytoplasmic. Residues 1–169 (MPALACLRRL…VAYGVGIIGF (169 aa)) form a sufficient for localization to Golgi membrane region. The chain crosses the membrane as a helical; Signal-anchor for type II membrane protein span at residues 18 to 39 (AVLFLLFIFCLFSVFISAYYLY). A heparan sulfate N-deacetylase 1 region spans residues 40-598 (GWKRGLEPSA…KRHKDIWSKE (559 aa)). At 40–882 (GWKRGLEPSA…WLREDLQNTR (843 aa)) the chain is on the lumenal side. N-linked (GlcNAc...) asparagine glycans are attached at residues Asn-231, Asn-351, and Asn-401. The segment at 599–882 (KTCDRFPKLL…WLREDLQNTR (284 aa)) is heparan sulfate N-sulfotransferase 1. Lys-614 acts as the For sulfotransferase activity in catalysis. An adenosine 3',5'-bisphosphate-binding site is contributed by 614-618 (KTGTT). N-linked (GlcNAc...) asparagine glycosylation occurs at Asn-667. Residues Ser-712 and Trp-817 each contribute to the adenosine 3',5'-bisphosphate site. Residues Cys-818 and Cys-828 are joined by a disulfide bond. 833–837 (KGRKY) contributes to the adenosine 3',5'-bisphosphate binding site.

It belongs to the sulfotransferase 1 family. NDST subfamily. In terms of assembly, monomer. Interacts with heparan sulfate co-polymerase subunits EXT1 and EXT2. Interacts with NDST1 isoform 3. As to quaternary structure, interacts with heparan sulfate co-polymerase subunits EXT1 and EXT2. Interacts with NDST1 isoform 1. In terms of tissue distribution, widely expressed. Expression is most abundant in heart, liver and pancreas.

The protein resides in the golgi apparatus. Its subcellular location is the trans-Golgi network membrane. It localises to the cis-Golgi network membrane. The catalysed reaction is N-acetyl-alpha-D-glucosaminyl-[heparan sulfate](n) + H2O = alpha-D-glucosaminyl-[heparan sulfate](n) + acetate. The enzyme catalyses alpha-D-glucosaminyl-[heparan sulfate](n) + 3'-phosphoadenylyl sulfate = N-sulfo-alpha-D-glucosaminyl-[heparan sulfate](n) + adenosine 3',5'-bisphosphate + 2 H(+). Its pathway is glycan metabolism; heparan sulfate biosynthesis. It functions in the pathway glycan metabolism; heparin biosynthesis. Its function is as follows. Essential bifunctional enzyme that catalyzes both the N-deacetylation and the N-sulfation of glucosamine (GlcNAc) of the glycosaminoglycan in heparan sulfate. Modifies the GlcNAc-GlcA disaccharide repeating sugar backbone to make N-sulfated heparosan, a prerequisite substrate for later modifications in heparin biosynthesis. Plays a role in determining the extent and pattern of sulfation of heparan sulfate. Participates in biosynthesis of heparan sulfate that can ultimately serve as L-selectin ligands, thereby playing a role in inflammatory response. Required for the exosomal release of SDCBP, CD63 and syndecan. In terms of biological role, lacks both N-deacetylase and N-sulfotransferase activities. Acts as a dominant negative on isoform 1, likely by changing the composition of enzyme complexes responsible for elongation and modification of heparan sulfates. The chain is Bifunctional heparan sulfate N-deacetylase/N-sulfotransferase 1 from Homo sapiens (Human).